The following is a 384-amino-acid chain: uncharacterized protein (384 aa).

2 disordered regions span residues 133–257 (RQNS…TNQD) and 297–368 (ERTP…STAT). A compositionally biased stretch (low complexity) spans 143–157 (PSTSSEPEPQPSTSS). Over residues 302–315 (DQTDITDDSADWSE) the composition is skewed to acidic residues. Over residues 316–342 (GETRRPSHSEVGERRLSRENNSEDPNR) the composition is skewed to basic and acidic residues. A compositionally biased stretch (basic residues) spans 343–363 (SRSRSRSRERRRRRPRVRPGR).

This is an uncharacterized protein from Gallid herpesvirus 2 (strain Chicken/Md5/ATCC VR-987) (GaHV-2).